Here is a 342-residue protein sequence, read N- to C-terminus: tRNA N6-adenosine threonylcarbamoyltransferase (342 aa).

Residues His-112 and His-116 each contribute to the Fe cation site. Residues 134-138 (IVSGG), Asp-167, Gly-180, and Asn-278 contribute to the substrate site. Residue Asp-306 participates in Fe cation binding.

The protein belongs to the KAE1 / TsaD family. Requires Fe(2+) as cofactor.

It localises to the cytoplasm. The catalysed reaction is L-threonylcarbamoyladenylate + adenosine(37) in tRNA = N(6)-L-threonylcarbamoyladenosine(37) in tRNA + AMP + H(+). Required for the formation of a threonylcarbamoyl group on adenosine at position 37 (t(6)A37) in tRNAs that read codons beginning with adenine. Is involved in the transfer of the threonylcarbamoyl moiety of threonylcarbamoyl-AMP (TC-AMP) to the N6 group of A37, together with TsaE and TsaB. TsaD likely plays a direct catalytic role in this reaction. This Anaplasma phagocytophilum (strain HZ) protein is tRNA N6-adenosine threonylcarbamoyltransferase.